The chain runs to 370 residues: UDP-N-acetylglucosamine--N-acetylmuramyl-(pentapeptide) pyrophosphoryl-undecaprenol N-acetylglucosamine transferase (370 aa).

Residues 15 to 17, asparagine 129, arginine 170, serine 200, isoleucine 253, and glutamine 298 each bind UDP-N-acetyl-alpha-D-glucosamine; that span reads TGG.

It belongs to the glycosyltransferase 28 family. MurG subfamily.

It localises to the cell inner membrane. The enzyme catalyses di-trans,octa-cis-undecaprenyl diphospho-N-acetyl-alpha-D-muramoyl-L-alanyl-D-glutamyl-meso-2,6-diaminopimeloyl-D-alanyl-D-alanine + UDP-N-acetyl-alpha-D-glucosamine = di-trans,octa-cis-undecaprenyl diphospho-[N-acetyl-alpha-D-glucosaminyl-(1-&gt;4)]-N-acetyl-alpha-D-muramoyl-L-alanyl-D-glutamyl-meso-2,6-diaminopimeloyl-D-alanyl-D-alanine + UDP + H(+). Its pathway is cell wall biogenesis; peptidoglycan biosynthesis. In terms of biological role, cell wall formation. Catalyzes the transfer of a GlcNAc subunit on undecaprenyl-pyrophosphoryl-MurNAc-pentapeptide (lipid intermediate I) to form undecaprenyl-pyrophosphoryl-MurNAc-(pentapeptide)GlcNAc (lipid intermediate II). This chain is UDP-N-acetylglucosamine--N-acetylmuramyl-(pentapeptide) pyrophosphoryl-undecaprenol N-acetylglucosamine transferase, found in Salinibacter ruber (strain DSM 13855 / M31).